Reading from the N-terminus, the 49-residue chain is Large ribosomal subunit protein bL33B (49 aa).

Belongs to the bacterial ribosomal protein bL33 family.

In Listeria welshimeri serovar 6b (strain ATCC 35897 / DSM 20650 / CCUG 15529 / CIP 8149 / NCTC 11857 / SLCC 5334 / V8), this protein is Large ribosomal subunit protein bL33B.